A 168-amino-acid polypeptide reads, in one-letter code: Cytochrome c-type biogenesis protein CcmE (168 aa).

Over 1–23 (MTTAPSGLPGTPLPPARRRERPR) the chain is Cytoplasmic. The chain crosses the membrane as a helical; Signal-anchor for type II membrane protein span at residues 24–44 (WPLLVAGAAVLGLIGYMVLGN). The Extracellular portion of the chain corresponds to 45–168 (ANSNLVYYVL…KILNDQSTKP (124 aa)). Residues histidine 137 and tyrosine 141 each contribute to the heme site. Positions 145 to 168 (DSKGEGQYSQDDLKKILNDQSTKP) are disordered.

Belongs to the CcmE/CycJ family.

Its subcellular location is the cell membrane. Its function is as follows. Heme chaperone required for the biogenesis of c-type cytochromes. Transiently binds heme delivered by CcmC and transfers the heme to apo-cytochromes in a process facilitated by CcmF and CcmH. The chain is Cytochrome c-type biogenesis protein CcmE from Deinococcus radiodurans (strain ATCC 13939 / DSM 20539 / JCM 16871 / CCUG 27074 / LMG 4051 / NBRC 15346 / NCIMB 9279 / VKM B-1422 / R1).